The following is a 962-amino-acid chain: Synphilin-1 (962 aa).

3 disordered regions span residues 80–99 (SPLK…DQKN), 104–137 (YQKG…EPSQ), and 222–249 (TALR…PAYE). ANK repeat units lie at residues 348–379 (NGNN…CLNE), 383–412 (EQLT…AIAE), 418–447 (DFPS…EQGI), and 455–484 (EGNS…NVTM). A coiled-coil region spans residues 522–548 (VKLTKQLKEQTVERVTLQSQLQQLLEA). A disordered region spans residues 548–590 (AQKSEGKSLPSSPSSPSSPASTKSQWKALDTDEESTGKSKVGA). A compositionally biased stretch (low complexity) spans 554–571 (KSLPSSPSSPSSPASTKS). An ANK 5 repeat occupies 602 to 631 (VSSRARTKGKDEDSDKILRQLLGKEISENV). A compositionally biased stretch (low complexity) spans 667-684 (RQLMQRSLSESDTDSNNS). The segment at 667–852 (RQLMQRSLSE…QRTSESGEQM (186 aa)) is disordered. The span at 685-699 (EDPKNTPVKRADRPR) shows a compositional bias: basic and acidic residues. One copy of the ANK 6 repeat lies at 698–728 (PRPQPIVESVENVDSAESLHLMIKKHSLASG). The segment covering 772-790 (PSTEATQSSPDSTAAQKVA) has biased composition (polar residues). Residues 831–840 (NGEKDKDKGR) are compositionally biased toward basic and acidic residues.

In terms of assembly, associates with SNCA, RNF19A and PRKN. Ubiquitinated; mediated by SIAH1 or RNF19A and leading to its subsequent proteasomal degradation.

In Mus musculus (Mouse), this protein is Synphilin-1 (Sncaip).